Here is a 503-residue protein sequence, read N- to C-terminus: Maturase K (503 aa).

The protein belongs to the intron maturase 2 family. MatK subfamily.

It is found in the plastid. The protein resides in the chloroplast. Its function is as follows. Usually encoded in the trnK tRNA gene intron. Probably assists in splicing its own and other chloroplast group II introns. The polypeptide is Maturase K (Actinodium cunninghamii (Albany daisy)).